Here is a 453-residue protein sequence, read N- to C-terminus: MAQKLEAIGRGLQWDDSSDHDNVTKILVRGGREGIQYVKFDYVKSGQPQTGLIHGLSGRGGFTQTFEIDQKDEHLVSVEGYYDVTKGVIQALKFKTNKKTSEMIGYDDTGIKLSLEVKGKKIIGFHGYAETNLNSLGAYFTTTGPIGLNPQVGHIKLAYQGGGGGIPWDHGPNHNGVKRVSFIFDENEIRQWRVDYDDGGVIRQYEPINGYDMFEVKEYPTEYIISVECTYDDVIPRSGRRMIRSIMFKTSKGRVSPIFGYPAARKFVLENNGGALIGFHGRVGAGIDALGAYFSSFIPSPPPPSPEKLQPEGGEAVGDPWDDGIFNGVREIHLEDGEGIALKFVYDKDVQVTELKVHGEPSGIGFNEFKLDYPSEYITTVEGFWDKTSGNERGVITRLRFTTNKQTFRPVGLESTTSFSLGKEGYKIVGFHGNSSTDKLHQLGVYVVPITRE.

3 consecutive Jacalin-type lectin domains span residues 1-142 (MAQK…YFTT), 154-296 (HIKL…YFSS), and 306-449 (PEKL…YVVP). Ala2 carries the post-translational modification N-acetylalanine.

It belongs to the jacalin lectin family. As to expression, expressed in roots.

This Arabidopsis thaliana (Mouse-ear cress) protein is Jacalin-related lectin 40 (JAL40).